The chain runs to 245 residues: Phycocyanobilin:ferredoxin oxidoreductase (245 aa).

Belongs to the HY2 family.

It catalyses the reaction (2R,3Z)-phycocyanobilin + 4 oxidized [2Fe-2S]-[ferredoxin] = biliverdin IXalpha + 4 reduced [2Fe-2S]-[ferredoxin] + 4 H(+). Its function is as follows. Catalyzes the four-electron reduction of biliverdin IX-alpha (2-electron reduction at both the A and D rings); the reaction proceeds via an isolatable 2-electron intermediate, 181,182-dihydrobiliverdin. The protein is Phycocyanobilin:ferredoxin oxidoreductase of Trichormus variabilis (strain ATCC 29413 / PCC 7937) (Anabaena variabilis).